The chain runs to 368 residues: MGSRTGSREEHSLQFLNLTKMTTTTASNLPWVEKYRPSKLDELVAHEQIVKTLTKFIENRTLPHLLFYGPPGTGKTTTVLAAARQMYSPTKMASMVLELNASDERGIDVVRNTIVNFAQTKGLQAFSTSSNTGTVPFKLVILDEADAMTKDAQNALRRVIEKYTDNVRFCIICNYLASIVPAIQSRCTRFRFAPLDQKLIVPRLEYIVETEQLKMTPDGKDALLIVSKGDMRTVINTLQSTAMSFDTVSENTVYQCIGQPTPKEMKEVVKTLLNDPSKKCMNTIQTKLFENGYALQDVITHLHDFVFTLDIPDEAMSAIITGLGEVEENLSTGCSNETQLAAVVAAFFEAKRLCVKEMKNLEIEDMEF.

69–76 (GPPGTGKT) is an ATP binding site.

It belongs to the activator 1 small subunits family. In terms of assembly, heteropentamer of various rfc subunits that forms a complex (RFC) with PCNA in the presence of ATP.

The protein localises to the nucleus. In terms of biological role, the elongation of primed DNA templates by DNA polymerase delta and epsilon requires the action of the accessory proteins proliferating cell nuclear antigen (PCNA) and activator 1. The chain is Probable replication factor C subunit 5 from Caenorhabditis elegans.